The following is a 223-amino-acid chain: Glutathione S-transferase Z2 (223 aa).

A GST N-terminal domain is found at 10–91 (AKLKLYSYWR…YLDDKYPEPP (82 aa)). Residues 20–21 (SS), 20–25 (SSCAHR), Q49, 49–50 (QS), 62–63 (TV), V63, 75–76 (DS), Q115, and 119–121 (NMA) contribute to the glutathione site. The 126-residue stretch at 96 to 221 (DYHKRAVNYQ…VPEKQPDTPS (126 aa)) folds into the GST C-terminal domain.

The protein belongs to the GST superfamily. Zeta family.

Its subcellular location is the cytoplasm. It localises to the cytosol. The enzyme catalyses RX + glutathione = an S-substituted glutathione + a halide anion + H(+). Its function is as follows. May be involved in the conjugation of reduced glutathione to a wide number of exogenous and endogenous hydrophobic electrophiles and have a detoxification role against certain herbicides. This Arabidopsis thaliana (Mouse-ear cress) protein is Glutathione S-transferase Z2 (GSTZ2).